A 373-amino-acid polypeptide reads, in one-letter code: Transaldolase (373 aa).

Lys-143 serves as the catalytic Schiff-base intermediate with substrate.

It belongs to the transaldolase family. Type 2 subfamily.

Its subcellular location is the cytoplasm. The enzyme catalyses D-sedoheptulose 7-phosphate + D-glyceraldehyde 3-phosphate = D-erythrose 4-phosphate + beta-D-fructose 6-phosphate. The protein operates within carbohydrate degradation; pentose phosphate pathway; D-glyceraldehyde 3-phosphate and beta-D-fructose 6-phosphate from D-ribose 5-phosphate and D-xylulose 5-phosphate (non-oxidative stage): step 2/3. Its function is as follows. Transaldolase is important for the balance of metabolites in the pentose-phosphate pathway. This chain is Transaldolase, found in Mycolicibacterium paratuberculosis (strain ATCC BAA-968 / K-10) (Mycobacterium paratuberculosis).